The chain runs to 1184 residues: Calcium-activated potassium channel subunit alpha-1a (1184 aa).

Residues Met-1–Met-39 are Extracellular-facing. A helical membrane pass occupies residues Trp-40–Leu-60. Over Trp-61–Arg-132 the chain is Cytoplasmic. Residues Cys-71, Cys-72, and Cys-74 are each lipidated (S-palmitoyl cysteine). Residues Val-133–Ser-153 form a helical membrane-spanning segment. The Extracellular portion of the chain corresponds to Ser-154–Thr-168. A helical transmembrane segment spans residues Leu-169–Ala-189. Residues Ala-190–Lys-193 are Cytoplasmic-facing. Residues Leu-194–Val-214 form a helical membrane-spanning segment. The Extracellular segment spans residues Ser-215–Leu-254. A helical membrane pass occupies residues Val-255 to Val-275. At Glu-276 to Gln-289 the chain is on the cytoplasmic side. Residues Pro-290 to Gly-310 form a helical membrane-spanning segment. Topologically, residues Asp-311–Leu-321 are extracellular. The chain crosses the membrane as a helical span at residues Phe-322–Ile-342. Residues Glu-343–Cys-1184 lie on the Cytoplasmic side of the membrane. Residues Arg-361–Ile-503 enclose the RCK N-terminal 1 domain. Glu-393, Gln-416, and Glu-418 together coordinate Mg(2+). Asn-468 is a binding site for Ca(2+). Positions Glu-655–Cys-677 are disordered. A Phosphothreonine modification is found at Thr-659. 3 positions are modified to phosphoserine: Ser-661, Ser-674, and Ser-678. Residues Ser-735–Pro-879 form the RCK N-terminal 2 domain. Position 866 is a phosphothreonine (Thr-866). Ser-874 and Ser-878 each carry phosphoserine. 4 residues coordinate Ca(2+): Gln-908, Asp-911, Asp-914, and Asp-916. The Calcium bowl signature appears at Gln-908–Asp-916. Residues Arg-1082–Ala-1143 are disordered. Positions Ser-1084–Ser-1104 are enriched in low complexity. Over residues Lys-1116–Asn-1125 the composition is skewed to basic and acidic residues.

It belongs to the potassium channel family. Calcium-activated (TC 1.A.1.3) subfamily. KCa1.1/KCNMA1 sub-subfamily. As to quaternary structure, homotetramer; which constitutes the calcium-activated potassium channel. Post-translationally, phosphorylated. Palmitoylated.

The protein localises to the cell membrane. The catalysed reaction is K(+)(in) = K(+)(out). In terms of biological role, potassium channel activated by both membrane depolarization or increase in cytosolic Ca(2+) that mediates export of K(+). It is also activated by the concentration of cytosolic Mg(2+). Its activation dampens the excitatory events that elevate the cytosolic Ca(2+) concentration and/or depolarize the cell membrane. It therefore contributes to repolarization of the membrane potential. Involved in determining peripheral auditory sensitivity. The chain is Calcium-activated potassium channel subunit alpha-1a from Danio rerio (Zebrafish).